The chain runs to 744 residues: Dual specificity protein kinase shkD (744 aa).

Residues 1 to 276 (MKRFFSNLFK…SGPPEILPEE (276 aa)) form a disordered region. Low complexity-rich tracts occupy residues 25-70 (PTTS…NSNQ), 79-107 (SPST…SFTP), and 127-200 (TSTT…QTAS). Polar residues predominate over residues 201–210 (VNHTSSDQSL). Positions 211–236 (NAQNVTQTNNNNNNNNNNNNNNNANN) are enriched in low complexity. The Protein kinase domain maps to 277–534 (IDRTDFLGQG…EILFRLNEIL (258 aa)). Residues 283–291 (LGQGSFGSV) and K304 each bind ATP. Residue D400 is the Proton acceptor of the active site. The SH2 domain occupies 641-734 (WFHGDIVREQ…LVPCPKFTQE (94 aa)).

It belongs to the protein kinase superfamily. Ser/Thr protein kinase family. SH2 domain-containing protein kinase subfamily.

It is found in the membrane. The enzyme catalyses L-seryl-[protein] + ATP = O-phospho-L-seryl-[protein] + ADP + H(+). It catalyses the reaction L-threonyl-[protein] + ATP = O-phospho-L-threonyl-[protein] + ADP + H(+). Required for proper chemotaxis and phagocytosis; proper spatiotemporal control of F-actin levels in chemotaxing cells. Negative regulator of the PI3K (phosphatidylinositol 3 kinase) pathway. Predominantly phosphorylates serines and threonines and tyrosines at a lower level. The polypeptide is Dual specificity protein kinase shkD (shkD) (Dictyostelium discoideum (Social amoeba)).